A 277-amino-acid polypeptide reads, in one-letter code: Energy-coupling factor transporter ATP-binding protein EcfA1 (277 aa).

The region spanning 5–243 (IRAQNVSFCY…VEVLKKIGLD (239 aa)) is the ABC transporter domain. 42–49 (GHNGSGKS) contacts ATP.

Belongs to the ABC transporter superfamily. Energy-coupling factor EcfA family. As to quaternary structure, forms a stable energy-coupling factor (ECF) transporter complex composed of 2 membrane-embedded substrate-binding proteins (S component), 2 ATP-binding proteins (A component) and 2 transmembrane proteins (T component).

It is found in the cell membrane. Its function is as follows. ATP-binding (A) component of a common energy-coupling factor (ECF) ABC-transporter complex. Unlike classic ABC transporters this ECF transporter provides the energy necessary to transport a number of different substrates. The polypeptide is Energy-coupling factor transporter ATP-binding protein EcfA1 (Caldanaerobacter subterraneus subsp. tengcongensis (strain DSM 15242 / JCM 11007 / NBRC 100824 / MB4) (Thermoanaerobacter tengcongensis)).